A 421-amino-acid polypeptide reads, in one-letter code: Serine hydroxymethyltransferase (421 aa).

Residues L121 and 125–127 (GHL) contribute to the (6S)-5,6,7,8-tetrahydrofolate site. The residue at position 229 (K229) is an N6-(pyridoxal phosphate)lysine.

Belongs to the SHMT family. Homodimer. Requires pyridoxal 5'-phosphate as cofactor.

Its subcellular location is the cytoplasm. It catalyses the reaction (6R)-5,10-methylene-5,6,7,8-tetrahydrofolate + glycine + H2O = (6S)-5,6,7,8-tetrahydrofolate + L-serine. It participates in one-carbon metabolism; tetrahydrofolate interconversion. It functions in the pathway amino-acid biosynthesis; glycine biosynthesis; glycine from L-serine: step 1/1. Catalyzes the reversible interconversion of serine and glycine with tetrahydrofolate (THF) serving as the one-carbon carrier. This reaction serves as the major source of one-carbon groups required for the biosynthesis of purines, thymidylate, methionine, and other important biomolecules. Also exhibits THF-independent aldolase activity toward beta-hydroxyamino acids, producing glycine and aldehydes, via a retro-aldol mechanism. The chain is Serine hydroxymethyltransferase from Actinobacillus pleuropneumoniae serotype 5b (strain L20).